The chain runs to 90 residues: Antitoxin epsilon (90 aa).

It belongs to the epsilon antitoxin family. As to quaternary structure, in the presence of the zeta toxin, forms an inactive PezA(2)PezT(2) heterotetramer. The heterotetramer is still able to bind the zeta toxin substrate UNAG.

Its function is as follows. Antitoxin component of a type II toxin-antitoxin (TA) system. Neutralizes the toxic effect of cognate zeta toxin. Part of a postsegregational killing (PSK) system involved in the killing of plasmid-free cells. Continuous synthesis of the epsilon antitoxin is required to counteract the zeta toxin. This is Antitoxin epsilon from Streptococcus pyogenes.